A 242-amino-acid chain; its full sequence is DNA repair protein RecO (242 aa).

It belongs to the RecO family.

Functionally, involved in DNA repair and RecF pathway recombination. This is DNA repair protein RecO from Wolbachia pipientis subsp. Culex pipiens (strain wPip).